We begin with the raw amino-acid sequence, 241 residues long: Synaptogyrin (241 aa).

The 150-residue stretch at 30-179 (FAMKPQVVIR…CALMAYKRFL (150 aa)) folds into the MARVEL domain. Transmembrane regions (helical) follow at residues 34-54 (PQVVIRALCWLFSVVVFGCIS), 81-101 (MVGVFGFLASMGFMGGEFLFE), 115-135 (ADMGFSALWTFMYFVAFLYLW), and 155-175 (TAIWFCLFSIVSWALCALMAY). A disordered region spans residues 216–241 (ASPFGQPQQGGMEQQQSGMEYQQPTY). Positions 220 to 241 (GQPQQGGMEQQQSGMEYQQPTY) are enriched in low complexity.

This sequence belongs to the synaptogyrin family.

The protein localises to the cytoplasmic vesicle membrane. It localises to the cytoplasmic vesicle. Its subcellular location is the secretory vesicle membrane. The protein resides in the secretory vesicle. It is found in the synaptic vesicle membrane. Required for the correct formation of synaptic vesicles at nerve terminals and has a role in the regulation of the synaptic vesicle exo-endocytic cycle. This chain is Synaptogyrin, found in Drosophila melanogaster (Fruit fly).